Reading from the N-terminus, the 1163-residue chain is MLLKKKRYMFDERDDNNINSPVAVEPSSNNNKMADTREVRIEEQLKVKIGEAKNLSSRNAANTSCSTQGTRDVYCTIALDQEEICRTPTIERTLTPFFGEEHQFKIPRRFRYLTIYLWDRDMKQDKPIGKIAIKREELHMYNHKDHWFSLRPVDQDSEVQGMVNVEVAFTEAQQTQSLSEGIDLGQHTLRHHQNLPHHSHQQRAHLNDYKENSELSNIQRASAAAASSSSAAMTLKTRAAGLFGHVHHPPSQTQHFPIINTTSTSSDQLSNWKSHGRFVGVTIKVPACVDLAKKQGTCDPFVVCTAHYSNKHQVTRRTKQRKKTVDPEFDEAMYFDLHIDADAGSTNTTGSNKSAGSLESSANKGYSIYPVGGADLVEIVVSVWHDAHGAMSDKVFLGEVRLPMLNKQEQQAVNPSAWYYLQPRSMTHSSRSLNATPRSCATPPGTRLSVDSTIGSLRLNLNYTADHVFPLATYDDLMNLLLESVDQRPITVSAVSILGELVSGKTEVAQPLVRLFTHTERIAPIIKALADHEISHLTDPTTIFRGNTLVSKMMDEAMRLSGLHYLHQTLRPVLSQIVAEKKPCEIDPSKIKDRSAVDTNLHNLQDYVERVFEAITKSADRCPKVLCQIFHDLRECAGEHFPSNREVRYSVVSGFIFLRFFAPAILGPKLFDLTTERLDAQTSRTLTLISKTIQSLGNLVSSRSSQQTCKEEFTVELYKKFCTEQHVDAVKHFLEVISTPSHASSSVHPAAAAATPLEPVLLKEGLMTKYPTSRKRFGRQFKQRHFRLTTHSLSYAKSKGKQPICDIPLQEIASVEQLKDKSFKMQNCFKIVHNDRSLIVQTTNCVEEREWFDLLHKICLMNSIRMQYFHPSAFVSGFYSCCGRSDENSPGCKKVLDKTMDYFQMDLVTALDPALDLQRIHTLIMSNMSVLESLLDPLTYHQSLSQTQHQQHNPLVPLATDLQKHSPQAFAEFKRTIEKLREKAYAIDRDHRDYKQGITRQLKYGSRQAPIGDDNYWHMMRAAGQLNQQHHQQQQHQQQQQQQQQQQLQQFQPQPVLPQMQNVRAYPYQPATSNMNAYCLHNMQYQQQRLPFHQQQQQHHQQLQQQQSQFQPLRSHQLQRHNNNLNNNNCGNGSSSSPSSTTSSVVAAPPSTTSSSQPAPPIY.

2 consecutive C2 domains span residues 26-148 (PSSN…DHWF) and 261-419 (TTST…SAWY). One can recognise a Ras-GAP domain in the interval 520–737 (ERIAPIIKAL…DAVKHFLEVI (218 aa)). The PH domain maps to 762–860 (LKEGLMTKYP…WFDLLHKICL (99 aa)). The segment at 862-898 (NSIRMQYFHPSAFVSGFYSCCGRSDENSPGCKKVLDK) adopts a Btk-type zinc-finger fold. Zn(2+) is bound by residues His-870, Cys-881, Cys-882, and Cys-892. Disordered regions lie at residues 1026 to 1051 (LNQQ…LQQF) and 1091 to 1163 (PFHQ…PPIY). Residues 1091 to 1157 (PFHQQQQQHH…APPSTTSSSQ (67 aa)) show a composition bias toward low complexity.

Interacts with sty. In terms of tissue distribution, in third instar larvae eye imaginal disk, expressed in cells posterior to the morphogenetic furrow, in all photoreceptor and cone cell precursors as well as in still uncommitted cells.

In terms of biological role, inhibitory regulator of the Ras-cyclic AMP pathway. May function as a negative regulator of Ras85D/Ras1 in the sev signaling pathway. Acts cell autonomously in cone cell precursors as a negative regulator of R7 photoreceptor cell determination. The chain is GTPase-activating protein (RasGAP1) from Drosophila melanogaster (Fruit fly).